The primary structure comprises 158 residues: UPF0260 protein RHECIAT_CH0001358 (158 aa).

This sequence belongs to the UPF0260 family.

This chain is UPF0260 protein RHECIAT_CH0001358, found in Rhizobium etli (strain CIAT 652).